The sequence spans 224 residues: Biosynthetic peptidoglycan transglycosylase (224 aa).

A helical transmembrane segment spans residues 12 to 32; that stretch reads ILVVLAILPVFLLLVYSLPFV.

The protein belongs to the glycosyltransferase 51 family.

The protein resides in the cell inner membrane. It carries out the reaction [GlcNAc-(1-&gt;4)-Mur2Ac(oyl-L-Ala-gamma-D-Glu-L-Lys-D-Ala-D-Ala)](n)-di-trans,octa-cis-undecaprenyl diphosphate + beta-D-GlcNAc-(1-&gt;4)-Mur2Ac(oyl-L-Ala-gamma-D-Glu-L-Lys-D-Ala-D-Ala)-di-trans,octa-cis-undecaprenyl diphosphate = [GlcNAc-(1-&gt;4)-Mur2Ac(oyl-L-Ala-gamma-D-Glu-L-Lys-D-Ala-D-Ala)](n+1)-di-trans,octa-cis-undecaprenyl diphosphate + di-trans,octa-cis-undecaprenyl diphosphate + H(+). The protein operates within cell wall biogenesis; peptidoglycan biosynthesis. Functionally, peptidoglycan polymerase that catalyzes glycan chain elongation from lipid-linked precursors. The polypeptide is Biosynthetic peptidoglycan transglycosylase (Brucella melitensis biotype 1 (strain ATCC 23456 / CCUG 17765 / NCTC 10094 / 16M)).